The chain runs to 510 residues: Probable cytochrome P450 517A2 (510 aa).

A helical membrane pass occupies residues 1–21; it reads MRILIIIILIIIVFLVKDTIK. Cys450 is a binding site for heme.

It belongs to the cytochrome P450 family. Heme serves as cofactor.

Its subcellular location is the membrane. The polypeptide is Probable cytochrome P450 517A2 (cyp517A2) (Dictyostelium discoideum (Social amoeba)).